The following is an 83-amino-acid chain: Exodeoxyribonuclease 7 small subunit (83 aa).

This sequence belongs to the XseB family. Heterooligomer composed of large and small subunits.

It localises to the cytoplasm. It catalyses the reaction Exonucleolytic cleavage in either 5'- to 3'- or 3'- to 5'-direction to yield nucleoside 5'-phosphates.. Its function is as follows. Bidirectionally degrades single-stranded DNA into large acid-insoluble oligonucleotides, which are then degraded further into small acid-soluble oligonucleotides. In Nitrobacter winogradskyi (strain ATCC 25391 / DSM 10237 / CIP 104748 / NCIMB 11846 / Nb-255), this protein is Exodeoxyribonuclease 7 small subunit.